Consider the following 216-residue polypeptide: Orotate phosphoribosyltransferase (216 aa).

Residue Lys30 participates in 5-phospho-alpha-D-ribose 1-diphosphate binding. An orotate-binding site is contributed by 38–39 (FF). 5-phospho-alpha-D-ribose 1-diphosphate is bound by residues 75–76 (YK), Arg102, Lys103, Lys106, His108, and 128–136 (DDVITAGTA). Residues Thr132 and Arg160 each contribute to the orotate site.

Belongs to the purine/pyrimidine phosphoribosyltransferase family. PyrE subfamily. In terms of assembly, homodimer. Mg(2+) serves as cofactor.

The enzyme catalyses orotidine 5'-phosphate + diphosphate = orotate + 5-phospho-alpha-D-ribose 1-diphosphate. Its pathway is pyrimidine metabolism; UMP biosynthesis via de novo pathway; UMP from orotate: step 1/2. Functionally, catalyzes the transfer of a ribosyl phosphate group from 5-phosphoribose 1-diphosphate to orotate, leading to the formation of orotidine monophosphate (OMP). This is Orotate phosphoribosyltransferase from Acinetobacter baumannii (strain ACICU).